Reading from the N-terminus, the 402-residue chain is Flavohemoprotein (402 aa).

One can recognise a Globin domain in the interval 1–138 (MLSPEVRALV…LADLLIGRER (138 aa)). Histidine 85 provides a ligand contact to heme b. Active-site charge relay system residues include tyrosine 95 and glutamate 137. Positions 149-402 (GGWTGWRAFK…AEVFGTGGVA (254 aa)) are reductase. Residues 152–261 (TGWRAFKVVR…SPPQGDFTLD (110 aa)) enclose the FAD-binding FR-type domain. FAD-binding positions include tyrosine 190 and 206-209 (RQYS). NADP(+) is bound at residue 274 to 279 (GVGLTP). 395-398 (VFGT) is an FAD binding site.

Belongs to the globin family. Two-domain flavohemoproteins subfamily. The protein in the C-terminal section; belongs to the flavoprotein pyridine nucleotide cytochrome reductase family. Requires heme b as cofactor. It depends on FAD as a cofactor.

It carries out the reaction 2 nitric oxide + NADPH + 2 O2 = 2 nitrate + NADP(+) + H(+). It catalyses the reaction 2 nitric oxide + NADH + 2 O2 = 2 nitrate + NAD(+) + H(+). In terms of biological role, is involved in NO detoxification in an aerobic process, termed nitric oxide dioxygenase (NOD) reaction that utilizes O(2) and NAD(P)H to convert NO to nitrate, which protects the bacterium from various noxious nitrogen compounds. Therefore, plays a central role in the inducible response to nitrosative stress. This chain is Flavohemoprotein, found in Bordetella pertussis (strain Tohama I / ATCC BAA-589 / NCTC 13251).